The sequence spans 225 residues: Ribonuclease 3 (225 aa).

Residues 5–127 (LERLQRQIGY…IIGAISLDSD (123 aa)) enclose the RNase III domain. Position 40 (E40) interacts with Mg(2+). Residue D44 is part of the active site. D113 and E116 together coordinate Mg(2+). Residue E116 is part of the active site. In terms of domain architecture, DRBM spans 154-224 (DPKTRLQEYL…AEKILQLLEM (71 aa)).

The protein belongs to the ribonuclease III family. Homodimer. Requires Mg(2+) as cofactor.

It is found in the cytoplasm. The catalysed reaction is Endonucleolytic cleavage to 5'-phosphomonoester.. In terms of biological role, digests double-stranded RNA. Involved in the processing of primary rRNA transcript to yield the immediate precursors to the large and small rRNAs (23S and 16S). Also processes some mRNAs, and tRNAs when they are encoded in the rRNA operon. CRISPR (clustered regularly interspaced short palindromic repeat) is an adaptive immune system that provides protection against mobile genetic elements (viruses, transposable elements and conjugative plasmids). CRISPR clusters contain spacers, sequences complementary to antecedent mobile elements, and target invading nucleic acids. CRISPR clusters are transcribed and processed into CRISPR RNA (crRNA). In this organism endogenous ribonuclease 3 and Cas9 are required for correct coprocessing of pre-crRNA and the trans-encoded small RNA (tracrRNA). Cas9, crRNA and tracrRNA are required for cleavage of invading DNA. Complements pre-crRNA and tracrRNA coprocessing defects in an rnc deletion in S.pyogenes strain 370. The polypeptide is Ribonuclease 3 (Pasteurella multocida (strain Pm70)).